Consider the following 94-residue polypeptide: Aspartyl/glutamyl-tRNA(Asn/Gln) amidotransferase subunit C (94 aa).

This sequence belongs to the GatC family. In terms of assembly, heterotrimer of A, B and C subunits.

The catalysed reaction is L-glutamyl-tRNA(Gln) + L-glutamine + ATP + H2O = L-glutaminyl-tRNA(Gln) + L-glutamate + ADP + phosphate + H(+). It carries out the reaction L-aspartyl-tRNA(Asn) + L-glutamine + ATP + H2O = L-asparaginyl-tRNA(Asn) + L-glutamate + ADP + phosphate + 2 H(+). Allows the formation of correctly charged Asn-tRNA(Asn) or Gln-tRNA(Gln) through the transamidation of misacylated Asp-tRNA(Asn) or Glu-tRNA(Gln) in organisms which lack either or both of asparaginyl-tRNA or glutaminyl-tRNA synthetases. The reaction takes place in the presence of glutamine and ATP through an activated phospho-Asp-tRNA(Asn) or phospho-Glu-tRNA(Gln). The polypeptide is Aspartyl/glutamyl-tRNA(Asn/Gln) amidotransferase subunit C (Solidesulfovibrio magneticus (strain ATCC 700980 / DSM 13731 / RS-1) (Desulfovibrio magneticus)).